Here is a 636-residue protein sequence, read N- to C-terminus: Chaperone protein HtpG (636 aa).

The segment at 1–342 (MSSETLEFQA…AHDLSLNISR (342 aa)) is a; substrate-binding. The interval 343–558 (ELLQQDRQIQ…AHDVTPTLEK (216 aa)) is b. Residues 559-636 (MYRAMGHEVP…ILAERLARTL (78 aa)) are c.

It belongs to the heat shock protein 90 family. Homodimer.

The protein localises to the cytoplasm. Functionally, molecular chaperone. Has ATPase activity. This Salinispora tropica (strain ATCC BAA-916 / DSM 44818 / JCM 13857 / NBRC 105044 / CNB-440) protein is Chaperone protein HtpG.